Reading from the N-terminus, the 441-residue chain is Velvet complex subunit B (441 aa).

Composition is skewed to polar residues over residues 1-14 (MNPG…QPGH) and 60-75 (MMQQ…STTE). The segment at 1-104 (MNPGYSSTAS…QPHVGEQDGR (104 aa)) is disordered. The Velvet domain occupies 100-426 (EQDGRKYRLD…AGQGIKIPIR (327 aa)).

It belongs to the velvet family. VelB subfamily. In terms of assembly, component of the heterotrimeric velvet complex composed of LAEA, VEA and VELB; VEA acting as a bridging protein between LAEA and VELB. Forms a heterodimeric complex with VOSA; the formation of the VELB-VOSA complex is light-dependent.

The protein localises to the nucleus. The protein resides in the cytoplasm. Functionally, component of the velvet transcription factor complex that controls sexual/asexual developmental ratio in response to light, promoting sexual development in the darkness while stimulating asexual sporulation under illumination. The velvet complex acts as a global regulator for secondary metabolite gene expression. Component of the VELB-VOSA heterodimeric complex that plays a dual role in activating genes associated with spore maturation and repressing certain development-associated genes. The VELB-VOSA complex binds DNA through the DNA-binding domain of VOSA that recognizes an 11-nucleotide consensus sequence 5'-CTGGCCGCGGC-3' consisting of two motifs in the promoters of key developmental regulatory genes. Involved in the regulation of the response to eactive oxygen species (ROS) stress. This is Velvet complex subunit B from Pyricularia oryzae (strain 70-15 / ATCC MYA-4617 / FGSC 8958) (Rice blast fungus).